The chain runs to 896 residues: Alanine--tRNA ligase (896 aa).

Positions 599, 603, 707, and 711 each coordinate Zn(2+).

The protein belongs to the class-II aminoacyl-tRNA synthetase family. Zn(2+) serves as cofactor.

Its subcellular location is the cytoplasm. The enzyme catalyses tRNA(Ala) + L-alanine + ATP = L-alanyl-tRNA(Ala) + AMP + diphosphate. In terms of biological role, catalyzes the attachment of alanine to tRNA(Ala) in a two-step reaction: alanine is first activated by ATP to form Ala-AMP and then transferred to the acceptor end of tRNA(Ala). Also edits incorrectly charged Ser-tRNA(Ala) and Gly-tRNA(Ala) via its editing domain. This is Alanine--tRNA ligase from Pyrobaculum calidifontis (strain DSM 21063 / JCM 11548 / VA1).